We begin with the raw amino-acid sequence, 466 residues long: Argininosuccinate lyase (466 aa).

This sequence belongs to the lyase 1 family. Argininosuccinate lyase subfamily.

The protein localises to the cytoplasm. It carries out the reaction 2-(N(omega)-L-arginino)succinate = fumarate + L-arginine. The protein operates within amino-acid biosynthesis; L-arginine biosynthesis; L-arginine from L-ornithine and carbamoyl phosphate: step 3/3. This chain is Argininosuccinate lyase, found in Ehrlichia ruminantium (strain Gardel).